The sequence spans 485 residues: CUGBP Elav-like family member 5 (485 aa).

Over residues Met1 to Arg11 the composition is skewed to basic and acidic residues. A disordered region spans residues Met1 to Lys40. Residues Gln12–Gly28 show a composition bias toward low complexity. 3 consecutive RRM domains span residues Ile45 to Ser126, Arg134 to Thr214, and Cys400 to Pro478.

This sequence belongs to the CELF/BRUNOL family. Expressed in brain.

Its subcellular location is the nucleus. It localises to the cytoplasm. In terms of biological role, RNA-binding protein implicated in the regulation of pre-mRNA alternative splicing. Mediates exon inclusion and/or exclusion in pre-mRNA that are subject to tissue-specific and developmentally regulated alternative splicing. Specifically activates exon 5 inclusion of cardiac isoforms of TNNT2 during heart remodeling at the juvenile to adult transition. Binds to muscle-specific splicing enhancer (MSE) intronic sites flanking the alternative exon 5 of TNNT2 pre-mRNA. This chain is CUGBP Elav-like family member 5 (CELF5), found in Homo sapiens (Human).